The sequence spans 1133 residues: Fas-binding factor 1 (1133 aa).

2 disordered regions span residues leucine 89–arginine 198 and isoleucine 211–glutamine 544. Over residues alanine 102–asparagine 113 the composition is skewed to basic and acidic residues. The span at lysine 125 to serine 134 shows a compositional bias: low complexity. Serine 142 carries the phosphoserine modification. A compositionally biased stretch (polar residues) spans proline 165–arginine 182. 2 stretches are compositionally biased toward basic and acidic residues: residues proline 221–leucine 245 and threonine 259–aspartate 276. Over residues serine 277–phenylalanine 286 the composition is skewed to acidic residues. The segment covering valine 295–arginine 310 has biased composition (low complexity). Residues serine 325 to isoleucine 336 show a composition bias toward polar residues. Residues alanine 415–leucine 424 show a composition bias toward basic and acidic residues. The span at serine 459–glycine 469 shows a compositional bias: polar residues. Positions alanine 473–threonine 482 are enriched in low complexity. 2 coiled-coil regions span residues alanine 577–alanine 727 and isoleucine 773–lysine 870. A Glycyl lysine isopeptide (Lys-Gly) (interchain with G-Cter in SUMO2) cross-link involves residue lysine 960. Residues alanine 1062–glycine 1085 form a disordered region.

May interact with FAS cytoplasmic domain. Interacts with PARD3. Interacts with TRAPPC14. Present in various epithelial cells (at protein level).

The protein resides in the cytoplasm. It is found in the cytoskeleton. The protein localises to the microtubule organizing center. Its subcellular location is the centrosome. It localises to the centriole. The protein resides in the spindle pole. It is found in the cell junction. Functionally, keratin-binding protein required for epithelial cell polarization. Involved in apical junction complex (AJC) assembly via its interaction with PARD3. Required for ciliogenesis. The sequence is that of Fas-binding factor 1 (FBF1) from Homo sapiens (Human).